Consider the following 162-residue polypeptide: Mitochondrial intermembrane space import and assembly protein 40 homolog (162 aa).

The segment at 1–61 (MGQAQSDENS…DNENESLEAK (61 aa)) is disordered. The span at 9–18 (NSIPTTTTTN) shows a compositional bias: low complexity. Cystine bridges form between Cys-68/Cys-70, Cys-79/Cys-112, and Cys-89/Cys-102. Residues 76-120 (NGSCGSQFSEAFLCFLKSTAEEKGSDCVNPFVALQSCINANPDAF) enclose the CHCH domain. Short sequence motifs (cx9C motif) lie at residues 79–89 (CGSQFSEAFLC) and 102–112 (CVNPFVALQSC). The segment at 119-162 (AFSKSVTGDEKETEKKEEQPPVQDHRIIPPLWAKDPPRSGNSKL) is disordered. Basic and acidic residues predominate over residues 125–145 (TGDEKETEKKEEQPPVQDHRI).

It localises to the mitochondrion intermembrane space. It is found in the peroxisome matrix. In terms of biological role, required for the import and folding of small cysteine-containing proteins in the mitochondrial intermembrane space. Involved in the mitochondrial oxidative folding of the copper-zinc superoxide dismutase CSD1, the copper chaperone for superoxide dismutase CCS, and subunits of the mitochondrial membrane respiratory chain NADH dehydrogenase (Complex I). Involved in the peroxisomal oxidative folding of the copper-zinc superoxide dismutase CSD3, and the fatty acid beta-oxidation multifunctional protein AIM1. The chain is Mitochondrial intermembrane space import and assembly protein 40 homolog from Arabidopsis thaliana (Mouse-ear cress).